The sequence spans 902 residues: Probable dipeptidyl-aminopeptidase B (902 aa).

2 disordered regions span residues 1–23 (MTRRRSTSGTSSRSSTDSGLSVD) and 53–72 (DAEADVDEPFLPTSSKKLGS). The Cytoplasmic portion of the chain corresponds to 1-78 (MTRRRSTSGT…KLGSGSRTRQ (78 aa)). Over residues 7–21 (TSGTSSRSSTDSGLS) the composition is skewed to low complexity. Residues 79–99 (IFWALVILCLGGWVLALVLFL) traverse the membrane as a helical; Signal-anchor for type II membrane protein segment. The Vacuolar portion of the chain corresponds to 100–902 (THGRASSQTA…VKRSVPAFAH (803 aa)). Residues N335 and N626 are each glycosylated (N-linked (GlcNAc...) asparagine). S740 (charge relay system) is an active-site residue. 2 N-linked (GlcNAc...) asparagine glycosylation sites follow: N794 and N799. Catalysis depends on charge relay system residues D817 and H850.

Belongs to the peptidase S9B family.

The protein localises to the vacuole membrane. It carries out the reaction Release of an N-terminal dipeptide, Xaa-Yaa-|-Zaa-, from a polypeptide, preferentially when Yaa is Pro, provided Zaa is neither Pro nor hydroxyproline.. In terms of biological role, type IV dipeptidyl-peptidase which removes N-terminal dipeptides sequentially from polypeptides having unsubstituted N-termini provided that the penultimate residue is proline. This chain is Probable dipeptidyl-aminopeptidase B (dapB), found in Aspergillus oryzae (strain ATCC 42149 / RIB 40) (Yellow koji mold).